Consider the following 102-residue polypeptide: Small ribosomal subunit protein uS10 (102 aa).

This sequence belongs to the universal ribosomal protein uS10 family. Part of the 30S ribosomal subunit.

Functionally, involved in the binding of tRNA to the ribosomes. The chain is Small ribosomal subunit protein uS10 from Methanococcus maripaludis (strain C7 / ATCC BAA-1331).